Consider the following 300-residue polypeptide: N-acetylmuramic acid 6-phosphate etherase (300 aa).

The 164-residue stretch at 57-220 folds into the SIS domain; sequence IAVAFQSGGR…TTGAMIRTGK (164 aa). The active-site Proton donor is the Glu-85. Glu-116 is an active-site residue.

This sequence belongs to the GCKR-like family. MurNAc-6-P etherase subfamily. In terms of assembly, homodimer.

It carries out the reaction N-acetyl-D-muramate 6-phosphate + H2O = N-acetyl-D-glucosamine 6-phosphate + (R)-lactate. Its pathway is amino-sugar metabolism; 1,6-anhydro-N-acetylmuramate degradation. The protein operates within amino-sugar metabolism; N-acetylmuramate degradation. It functions in the pathway cell wall biogenesis; peptidoglycan recycling. Its function is as follows. Specifically catalyzes the cleavage of the D-lactyl ether substituent of MurNAc 6-phosphate, producing GlcNAc 6-phosphate and D-lactate. Together with AnmK, is also required for the utilization of anhydro-N-acetylmuramic acid (anhMurNAc) either imported from the medium or derived from its own cell wall murein, and thus plays a role in cell wall recycling. This chain is N-acetylmuramic acid 6-phosphate etherase, found in Aliivibrio fischeri (strain ATCC 700601 / ES114) (Vibrio fischeri).